The sequence spans 1264 residues: Phosphatidylinositol 3,4,5-trisphosphate 5-phosphatase 2 (1264 aa).

In terms of domain architecture, SH2 spans 26 to 122 (WYHRDLSRAA…GLVCALLLPV (97 aa)). Residues 124 to 137 (REREPDPPDDRDVS) are compositionally biased toward basic and acidic residues. The tract at residues 124–182 (REREPDPPDDRDVSDGEDEKPPLPPRSGSTSISAPVGPGSPPAAPETPTTPAAESAPNG) is disordered. Residue serine 137 is modified to Phosphoserine. Residues 169–180 (ETPTTPAAESAP) show a composition bias toward low complexity. Threonine 170 is modified (phosphothreonine). Phosphoserine occurs at positions 246 and 358. Residue tyrosine 892 is modified to Phosphotyrosine. Serine 896 carries the post-translational modification Phosphoserine. Residues 903-1123 (GAKSKAPSVS…TFLGEVASGD (221 aa)) form a disordered region. Residues 944 to 954 (PPPTGRPPAPP) show a composition bias toward pro residues. The short motif at 950–955 (PPAPPR) is the SH3-binding element. Residues 957-971 (ASREEPLTPRLKAEG) show a composition bias toward basic and acidic residues. Threonine 964 carries the post-translational modification Phosphothreonine. The NPXY motif motif lies at 989-992 (NPAY). A Phosphotyrosine modification is found at tyrosine 992. 3 stretches are compositionally biased toward pro residues: residues 1002–1017 (LLPP…PVPP), 1054–1065 (LPPPDFPPPPLP), and 1093–1110 (GPPP…PGPS). Serine 1137 is subject to Phosphoserine. Residues 1140 to 1178 (DYAPAGPGRSVLLPGPLELQPPRGLPSDYGRPLSFPPPR) form a disordered region. A phosphotyrosine mark is found at tyrosine 1141 and tyrosine 1168. The SAM domain occupies 1210 to 1264 (WLRAIGLERYEEGLVHNGWDDLEFLSDITEEDLEEAGVQDPAHKRLLLDTLQLSK). The residue at position 1263 (serine 1263) is a Phosphoserine.

The protein belongs to the inositol 1,4,5-trisphosphate 5-phosphatase family. In terms of assembly, interacts with tyrosine phosphorylated form of SHC1. Interacts with EGFR. Upon stimulation by the EGF signaling pathway, it forms a complex with SHC1 and EGFR. Interacts with cytoskeletal protein SORBS3/vinexin, promoting its localization to the periphery of cells. Forms a complex with filamin (FLNA or FLNB), actin, GPIb (GP1BA or GP1BB) that regulates cortical and submembraneous actin. Interacts with c-Met/MET, when c-Met/MET is phosphorylated on 'Tyr-1356'. Interacts with p130Cas/BCAR1. Interacts with CENTD3/ARAP3 via its SAM domain. Interacts with c-Cbl/CBL and CAP/SORBS1. Interacts with activated EPHA2 receptor. Interacts with receptor FCGR2A. Interacts with receptor FCGR2B. Interacts with tyrosine kinase ABL1. Interacts with tyrosine kinase TEC. Interacts with CSF1R. Interacts (via N-terminus) with SH3YL1 (via SH3 domain). Interacts with FCRL6 (tyrosine phosphorylated form). Interacts (via SH2 domain) with tyrosine phosphorylated KLRC1 (via ITIM). Interacts with NEDD9/HEF1. Tyrosine phosphorylated by the members of the SRC family after exposure to a diverse array of extracellular stimuli such as insulin, growth factors such as EGF or PDGF, chemokines, integrin ligands and hypertonic and oxidative stress. May be phosphorylated upon IgG receptor FCGR2B-binding. Phosphorylated at Tyr-992 following cell attachment and spreading. Phosphorylated at Tyr-1168 following EGF signaling pathway stimulation. Phosphorylated at Thr-964 in response to PDGF.

Its subcellular location is the cytoplasm. The protein resides in the cytosol. It is found in the membrane. The protein localises to the cell projection. It localises to the filopodium. Its subcellular location is the lamellipodium. The protein resides in the basal cell membrane. It is found in the nucleus. The protein localises to the nucleus speckle. It localises to the cytoskeleton. Its subcellular location is the spindle pole. The catalysed reaction is a 1,2-diacyl-sn-glycero-3-phospho-(1D-myo-inositol-3,4,5-trisphosphate) + H2O = a 1,2-diacyl-sn-glycero-3-phospho-(1D-myo-inositol-3,4-bisphosphate) + phosphate. It catalyses the reaction 1,2-dioctanoyl-sn-glycero-3-phospho-(1D-myo-inositol-3,4,5-trisphosphate) + H2O = 1,2-dioctanoyl-sn-glycero-3-phospho-(1D-myo-inositol-3,4-bisphosphate) + phosphate. It carries out the reaction 1,2-dihexadecanoyl-sn-glycero-3-phospho-(1D-myo-inositol-3,4,5-trisphosphate) + H2O = 1,2-dihexadecanoyl-sn-glycero-3-phospho-(1D-myo-inositol-3,4-bisphosphate) + phosphate. Its activity is regulated as follows. Activated upon translocation to the sites of synthesis of PtdIns(3,4,5)P3 in the membrane. Enzymatic activity is enhanced in the presence of phosphatidylserine. Its function is as follows. Phosphatidylinositol (PtdIns) phosphatase that specifically hydrolyzes the 5-phosphate of phosphatidylinositol-3,4,5-trisphosphate (PtdIns(3,4,5)P3) to produce PtdIns(3,4)P2, thereby negatively regulating the PI3K (phosphoinositide 3-kinase) pathways. Required for correct mitotic spindle orientation and therefore progression of mitosis. Plays a central role in regulation of PI3K-dependent insulin signaling, although the precise molecular mechanisms and signaling pathways remain unclear. While overexpression reduces both insulin-stimulated MAP kinase and Akt activation, its absence does not affect insulin signaling or GLUT4 trafficking. Confers resistance to dietary obesity. May act by regulating AKT2, but not AKT1, phosphorylation at the plasma membrane. Part of a signaling pathway that regulates actin cytoskeleton remodeling. Required for the maintenance and dynamic remodeling of actin structures as well as in endocytosis, having a major impact on ligand-induced EGFR internalization and degradation. Participates in regulation of cortical and submembraneous actin by hydrolyzing PtdIns(3,4,5)P3 thereby regulating membrane ruffling. Regulates cell adhesion and cell spreading. Required for HGF-mediated lamellipodium formation, cell scattering and spreading. Acts as a negative regulator of EPHA2 receptor endocytosis by inhibiting via PI3K-dependent Rac1 activation. Acts as a regulator of neuritogenesis by regulating PtdIns(3,4,5)P3 level and is required to form an initial protrusive pattern, and later, maintain proper neurite outgrowth. Acts as a negative regulator of the FC-gamma-RIIA receptor (FCGR2A). Mediates signaling from the FC-gamma-RIIB receptor (FCGR2B), playing a central role in terminating signal transduction from activating immune/hematopoietic cell receptor systems. Involved in EGF signaling pathway. Upon stimulation by EGF, it is recruited by EGFR and dephosphorylates PtdIns(3,4,5)P3. Plays a negative role in regulating the PI3K-PKB pathway, possibly by inhibiting PKB activity. Down-regulates Fc-gamma-R-mediated phagocytosis in macrophages independently of INPP5D/SHIP1. In macrophages, down-regulates NF-kappa-B-dependent gene transcription by regulating macrophage colony-stimulating factor (M-CSF)-induced signaling. Plays a role in the localization of AURKA and NEDD9/HEF1 to the basolateral membrane at interphase in polarized cysts, thereby mediates cell cycle homeostasis, cell polarization and cilia assembly. Additionally promotion of cilia growth is also facilitated by hydrolysis of (PtdIns(3,4,5)P3) to PtdIns(3,4)P2. Promotes formation of apical membrane-initiation sites during the initial stages of lumen formation via Rho family-induced actin filament organization and CTNNB1 localization to cell-cell contacts. May also hydrolyze PtdIns(1,3,4,5)P4, and could thus affect the levels of the higher inositol polyphosphates like InsP6. Involved in endochondral ossification. This chain is Phosphatidylinositol 3,4,5-trisphosphate 5-phosphatase 2, found in Canis lupus familiaris (Dog).